The sequence spans 454 residues: tRNA modification GTPase MnmE (454 aa).

(6S)-5-formyl-5,6,7,8-tetrahydrofolate-binding residues include Arg-23, Glu-80, and Lys-120. The 162-residue stretch at 216–377 (GMKVVIAGRP…LRNHLKQSMG (162 aa)) folds into the TrmE-type G domain. Asn-226 lines the K(+) pocket. Residues 226–231 (NAGKSS), 245–251 (TDIAGTT), 270–273 (DTAG), 335–338 (NKAD), and 358–360 (SAR) contribute to the GTP site. A Mg(2+)-binding site is contributed by Ser-230. Thr-245, Ile-247, and Thr-250 together coordinate K(+). Thr-251 provides a ligand contact to Mg(2+). Residue Lys-454 participates in (6S)-5-formyl-5,6,7,8-tetrahydrofolate binding.

It belongs to the TRAFAC class TrmE-Era-EngA-EngB-Septin-like GTPase superfamily. TrmE GTPase family. As to quaternary structure, homodimer. Heterotetramer of two MnmE and two MnmG subunits. Requires K(+) as cofactor.

It is found in the cytoplasm. Exhibits a very high intrinsic GTPase hydrolysis rate. Involved in the addition of a carboxymethylaminomethyl (cmnm) group at the wobble position (U34) of certain tRNAs, forming tRNA-cmnm(5)s(2)U34. This chain is tRNA modification GTPase MnmE, found in Shigella flexneri serotype 5b (strain 8401).